The sequence spans 294 residues: Tetraspanin-15 (294 aa).

Residues 1 to 23 (MPRGDSEQVRYCARFSYLWLKFS) are Cytoplasmic-facing. The chain crosses the membrane as a helical span at residues 24–44 (LVIYSTVFWLIGGLVLSVGIY). Residues 45 to 62 (AEVERQKYKTLESAFLAP) lie on the Extracellular side of the membrane. The helical transmembrane segment at 63-83 (AIILILLGVVMFIVSFIGVLA) threads the bilayer. At 84 to 93 (SLRDNLCLLQ) the chain is on the cytoplasmic side. The chain crosses the membrane as a helical span at residues 94 to 114 (AFMYILGICLIIELIGGVVAL). Residues 115 to 235 (IFRNQTIDFL…WFTDNYTIMA (121 aa)) are Extracellular-facing. Asn118 carries an N-linked (GlcNAc...) asparagine glycan. 4 disulfides stabilise this stretch: Cys154-Cys219, Cys155-Cys185, Cys171-Cys179, and Cys186-Cys198. N-linked (GlcNAc...) asparagine glycans are attached at residues Asn189 and Asn230. A helical transmembrane segment spans residues 236 to 256 (GVLLGILLPQFLGVLLTFLYI). At 257–294 (TRVEDIITEHSVTDGLLGPGTKAGVEAAGTGCCMCYPI) the chain is on the cytoplasmic side.

It belongs to the tetraspanin (TM4SF) family. In terms of assembly, interacts with ADAM10; the interaction influences ADAM10 substrate specificity, endocytosis and turnover. Post-translationally, palmitoylated.

It is found in the cell membrane. It localises to the late endosome membrane. Part of TspanC8 subgroup, composed of 6 members that interact with the transmembrane metalloprotease ADAM10. This interaction is required for ADAM10 exit from the endoplasmic reticulum and for enzymatic maturation and trafficking to the cell surface as well as substrate specificity. Different TspanC8/ADAM10 complexes have distinct substrates. Promotes ADAM10-mediated cleavage of CDH2. Negatively regulates ligand-induced Notch activity probably by regulating ADAM10 activity. This chain is Tetraspanin-15 (TSPAN15), found in Bos taurus (Bovine).